The primary structure comprises 3396 residues: MFINIKSILWMCSTLIVTHALHKVKVGKSPPVRGSLSGKVSLPCHFSTMPTLPPSYNTSEFLRIKWSKIEVDKNGKDLKETTVLVAQNGNIKIGQDYKGRVSVPTHPEAVGDASLTVVKLLASDAGLYRCDVMYGIEDTQDTVSLTVDGVVFHYRAATSRYTLNFEAAQKACLDVGAVIATPEQLFAAYEDGFEQCDAGWLADQTVRYPIRAPRVGCYGDKMGKAGVRTYGFRSPQETYDVYCYVDHLDGDVFHLTVPSKFTFEEAAKECENQDARLATVGELQAAWRNGFDQCDYGWLSDASVRHPVTVARAQCGGGLLGVRTLYRFENQTGFPPPDSRFDAYCFKPKEATTIDLSILAETASPSLSKEPQMVSDRTTPIIPLVDELPVIPTEFPPVGNIVSFEQKATVQPQAITDSLATKLPTPTGSTKKPWDMDDYSPSASGPLGKLDISEIKEEVLQSTTGVSHYATDSWDGVVEDKQTQESVTQIEQIEVGPLVTSMEILKHIPSKEFPVTETPLVTARMILESKTEKKMVSTVSELVTTGHYGFTLGEEDDEDRTLTVGSDESTLIFDQIPEVITVSKTSEDTIHTHLEDLESVSASTTVSPLIMPDNNGSSMDDWEERQTSGRITEEFLGKYLSTTPFPSQHRTEIELFPYSGDKILVEGISTVIYPSLQTEMTHRRERTETLIPEMRTDTYTDEIQEEITKSPFMGKTEEEVFSGMKLSTSLSEPIHVTESSVEMTKSFDFPTLITKLSAEPTEVRDMEEDFTATPGTTKYDENITTVLLAHGTLSVEAATVSKWSWDEDNTTSKPLESTEPSASSKLPPALLTTVGMNGKDKDIPSFTEDGADEFTLIPDSTQKQLEEVTDEDIAAHGKFTIRFQPTTSTGIAEKSTLRDSTTEEKVPPITSTEGQVYATMEGSALGEVEDVDLSKPVSTVPQFAHTSEVEGLAFVSYSSTQEPTTYVDSSHTIPLSVIPKTDWGVLVPSVPSEDEVLGEPSQDILVIDQTRLEATISPETMRTTKITEGTTQEEFPWKEQTAEKPVPALSSTAWTPKEAVTPLDEQEGDGSAYTVSEDELLTGSERVPVLETTPVGKIDHSVSYPPGAVTEHKVKTDEVVTLTPRIGPKVSLSPGPEQKYETEGSSTTGFTSSLSPFSTHITQLMEETTTEKTSLEDIDLGSGLFEKPKATELIEFSTIKVTVPSDITTAFSSVDRLHTTSAFKPSSAITKKPPLIDREPGEETTSDMVIIGESTSHVPPTTLEDIVAKETETDIDREYFTTSSPPATQPTRPPTVEDKEAFGPQALSTPQPPASTKFHPDINVYIIEVRENKTGRMSDLSVIGHPIDSESKEDEPCSEETDPVHDLMAEILPEFPDIIEIDLYHSEENEEEEEECANATDVTTTPSVQYINGKHLVTTVPKDPEAAEARRGQFESVAPSQNFSDSSESDTHPFVIAKTELSTAVQPNESTETTESLEVTWKPETYPETSEHFSGGEPDVFPTVPFHEEFESGTAKKGAESVTERDTEVGHQAHEHTEPVSLFPEESSGEIAIDQESQKIAFARATEVTFGEEVEKSTSVTYTPTIVPSSASAYVSEEEAVTLIGNPWPDDLLSTKESWVEATPRQVVELSGSSSIPITEGSGEAEEDEDTMFTMVTDLSQRNTTDTLITLDTSRIITESFFEVPATTIYPVSEQPSAKVVPTKFVSETDTSEWISSTTVEEKKRKEEEGTTGTASTFEVYSSTQRSDQLILPFELESPNVATSSDSGTRKSFMSLTTPTQSEREMTDSTPVFTETNTLENLGAQTTEHSSIHQPGVQEGLTTLPRSPASVFMEQGSGEAAADPETTTVSSFSLNVEYAIQAEKEVAGTLSPHVETTFSTEPTGLVLSTVMDRVVAENITQTSREIVISERLGEPNYGAEIRGFSTGFPLEEDFSGDFREYSTVSHPIAKEETVMMEGSGDAAFRDTQTSPSTVPTSVHISHISDSEGPSSTMVSTSAFPWEEFTSSAEGSGEQLVTVSSSVVPVLPSAVQKFSGTASSIIDEGLGEVGTVNEIDRRSTILPTAEVEGTKAPVEKEEVKVSGTVSTNFPQTIEPAKLWSRQEVNPVRQEIESETTSEEQIQEEKSFESPQNSPATEQTIFDSQTFTETELKTTDYSVLTTKKTYSDDKEMKEEDTSLVNMSTPDPDANGLESYTTLPEATEKSHFFLATALVTESIPAEHVVTDSPIKKEESTKHFPKGMRPTIQESDTELLFSGLGSGEEVLPTLPTESVNFTEVEQINNTLYPHTSQVESTSSDKIEDFNRMENVAKEVGPLVSQTDIFEGSGSVTSTTLIEILSDTGAEGPTVAPLPFSTDIGHPQNQTVRWAEEIQTSRPQTITEQDSNKNSSTAEINETTTSSTDFLARAYGFEMAKEFVTSAPKPSDLYYEPSGEGSGEVDIVDSFHTSATTQATRQESSTTFVSDGSLEKHPEVPSAKAVTADGFPTVSVMLPLHSEQNKSSPDPTSTLSNTVSYERSTDGSFQDRFREFEDSTLKPNRKKPTENIIIDLDKEDKDLILTITESTILEILPELTSDKNTIIDIDHTKPVYEDILGMQTDIDTEVPSEPHDSNDESNDDSTQVQEIYEAAVNLSLTEETFEGSADVLASYTQATHDESMTYEDRSQLDHMGFHFTTGIPAPSTETELDVLLPTATSLPIPRKSATVIPEIEGIKAEAKALDDMFESSTLSDGQAIADQSEIIPTLGQFERTQEEYEDKKHAGPSFQPEFSSGAEEALVDHTPYLSIATTHLMDQSVTEVPDVMEGSNPPYYTDTTLAVSTFAKLSSQTPSSPLTIYSGSEASGHTEIPQPSALPGIDVGSSVMSPQDSFKEIHVNIEATFKPSSEEYLHITEPPSLSPDTKLEPSEDDGKPELLEEMEASPTELIAVEGTEILQDFQNKTDGQVSGEAIKMFPTIKTPEAGTVITTADEIELEGATQWPHSTSASATYGVEAGVVPWLSPQTSERPTLSSSPEINPETQAALIRGQDSTIAASEQQVAARILDSNDQATVNPVEFNTEVATPPFSLLETSNETDFLIGINEESVEGTAIYLPGPDRCKMNPCLNGGTCYPTETSYVCTCVPGYSGDQCELDFDECHSNPCRNGATCVDGFNTFRCLCLPSYVGALCEQDTETCDYGWHKFQGQCYKYFAHRRTWDAAERECRLQGAHLTSILSHEEQMFVNRVGHDYQWIGLNDKMFEHDFRWTDGSTLQYENWRPNQPDSFFSAGEDCVVIIWHENGQWNDVPCNYHLTYTCKKGTVACGQPPVVENAKTFGKMKPRYEINSLIRYHCKDGFIQRHLPTIRCLGNGRWAIPKITCMNPSAYQRTYSMKYFKNSSSAKDNSINTSKHDHRWSRRWQESRR.

The N-terminal stretch at 1 to 20 (MFINIKSILWMCSTLIVTHA) is a signal peptide. The 126-residue stretch at 21–146 (LHKVKVGKSP…EDTQDTVSLT (126 aa)) folds into the Ig-like V-type domain. 5 disulfides stabilise this stretch: Cys44-Cys130, Cys172-Cys243, Cys196-Cys217, Cys270-Cys345, and Cys294-Cys315. N-linked (GlcNAc...) asparagine glycosylation is present at Asn57. 2 consecutive Link domains span residues 150–245 (VVFH…YCYV) and 251–347 (DVFH…YCFK). A glycan (N-linked (GlcNAc...) asparagine) is linked at Asn330. The tract at residues 348–1335 (PKEATTIDLS…IIEVRENKTG (988 aa)) is GAG-alpha (glucosaminoglycan attachment domain). The segment covering 420 to 430 (ATKLPTPTGST) has biased composition (polar residues). Disordered stretches follow at residues 420-439 (ATKL…MDDY) and 603-622 (STTV…MDDW). An N-linked (GlcNAc...) asparagine glycan is attached at Asn615. Ser659 carries an O-linked (Xyl...) (chondroitin sulfate) serine glycan. N-linked (GlcNAc...) asparagine glycosylation is found at Asn782 and Asn809. 3 disordered regions span residues 807–829 (EDNT…LPPA), 1126–1154 (IGPK…TSSL), and 1277–1316 (REYF…PAST). Residues 811–824 (TSKPLESTEPSASS) are compositionally biased toward polar residues. The segment covering 1143 to 1154 (EGSSTTGFTSSL) has biased composition (low complexity). 2 N-linked (GlcNAc...) asparagine glycosylation sites follow: Asn1332 and Asn1398. The interval 1336 to 3089 (RMSDLSVIGH…VEGTAIYLPG (1754 aa)) is GAG-beta. Disordered regions lie at residues 1420–1497 (VPKD…SGGE) and 1510–1539 (FESG…HTEP). The span at 1422–1433 (KDPEAAEARRGQ) shows a compositional bias: basic and acidic residues. N-linked (GlcNAc...) asparagine glycans are attached at residues Asn1442 and Asn1468. The segment covering 1469–1480 (ESTETTESLEVT) has biased composition (low complexity). Basic and acidic residues predominate over residues 1517–1538 (KGAESVTERDTEVGHQAHEHTE). 2 O-linked (Xyl...) (chondroitin sulfate) serine glycosylation sites follow: Ser1548 and Ser1631. The N-linked (GlcNAc...) asparagine glycan is linked to Asn1663. Disordered stretches follow at residues 1717-1737 (STTV…TAST) and 1759-1789 (PNVA…MTDS). Positions 1720–1729 (VEEKKRKEEE) are enriched in basic and acidic residues. A compositionally biased stretch (polar residues) spans 1760–1781 (NVATSSDSGTRKSFMSLTTPTQ). A glycan (N-linked (GlcNAc...) asparagine) is linked at Asn1898. O-linked (Xyl...) (chondroitin sulfate) serine glycans are attached at residues Ser1935 and Ser1959. Disordered stretches follow at residues 1962-1994 (AAFR…STMV), 2107-2134 (RQEI…NSPA), and 2168-2188 (KEMK…PDAN). Residues 1969–1978 (TSPSTVPTSV) are compositionally biased toward low complexity. Positions 2111-2120 (ESETTSEEQI) are enriched in acidic residues. Ser2116 is subject to Phosphoserine; by FAM20C. Asn2179 carries N-linked (GlcNAc...) asparagine glycosylation. O-linked (Xyl...) (chondroitin sulfate) serine glycosylation is found at Ser2247 and Ser2254. N-linked (GlcNAc...) asparagine glycosylation is found at Asn2272, Asn2280, Asn2360, Asn2385, and Asn2392. Disordered regions lie at residues 2371-2396 (TSRP…ETTT), 2445-2473 (SATT…EVPS), 2493-2518 (SEQN…STDG), and 2598-2617 (DTEV…DDST). Polar residues-rich tracts occupy residues 2445 to 2461 (SATT…TFVS) and 2496 to 2513 (NKSS…VSYE). N-linked (GlcNAc...) asparagine glycosylation occurs at Asn2496. Ser2608 carries the phosphoserine modification. At Thr2617 the chain carries Phosphothreonine. N-linked (GlcNAc...) asparagine glycosylation is present at Asn2628. Ser2722, Ser2723, and Ser2767 each carry an O-linked (Xyl...) (chondroitin sulfate) serine glycan. Disordered regions lie at residues 2834–2856 (GSEA…DVGS) and 2881–2905 (EEYL…EDDG). Residues 2896-2905 (TKLEPSEDDG) are compositionally biased toward basic and acidic residues. A glycan (N-linked (GlcNAc...) asparagine) is linked at Asn2934. O-linked (Xyl...) (chondroitin sulfate) serine glycosylation is present at Ser2941. Asn3067 carries an N-linked (GlcNAc...) asparagine glycan. The 37-residue stretch at 3089-3125 (GPDRCKMNPCLNGGTCYPTETSYVCTCVPGYSGDQCE) folds into the EGF-like 1 domain. Intrachain disulfides connect Cys3093–Cys3104, Cys3098–Cys3113, Cys3115–Cys3124, Cys3131–Cys3142, Cys3136–Cys3151, Cys3153–Cys3162, Cys3169–Cys3180, Cys3197–Cys3289, Cys3265–Cys3281, Cys3296–Cys3339, and Cys3325–Cys3352. One can recognise an EGF-like 2; calcium-binding domain in the interval 3127 to 3163 (DFDECHSNPCRNGATCVDGFNTFRCLCLPSYVGALCE). In terms of domain architecture, C-type lectin spans 3176 to 3290 (FQGQCYKYFA…CNYHLTYTCK (115 aa)). The 61-residue stretch at 3294–3354 (VACGQPPVVE…WAIPKITCMN (61 aa)) folds into the Sushi domain. N-linked (GlcNAc...) asparagine glycans are attached at residues Asn3369 and Asn3379. A compositionally biased stretch (polar residues) spans 3371-3380 (SSAKDNSINT). The segment at 3371-3396 (SSAKDNSINTSKHDHRWSRRWQESRR) is disordered.

This sequence belongs to the aggrecan/versican proteoglycan family. In terms of assembly, interacts with FBLN1. Phosphorylated by FAM20C in the extracellular medium. In terms of processing, proteolytically cleaved by ADAMTS5 and ADAMTS15 in the pericellular matrix surrounding myoblasts, facilitating myoblast contact and fusion which is required for skeletal muscle development and regeneration. Detected in placenta (at protein level). Detected in cerebrospinal fluid, fibroblasts and urine (at protein level). Expressed in the retina (at protein level). Cerebral white matter and plasma. Isoform V0: Expressed in normal brain, gliomas, medulloblastomas, schwannomas, neurofibromas, and meningiomas. Isoform V1: Expressed in normal brain, gliomas, medulloblastomas, schwannomas, neurofibromas, and meningiomas. Isoform V2: Restricted to normal brain and gliomas. Isoform V3: Found in all these tissues except medulloblastomas.

The protein localises to the secreted. It is found in the extracellular space. The protein resides in the extracellular matrix. It localises to the cell projection. Its subcellular location is the cilium. The protein localises to the photoreceptor outer segment. It is found in the interphotoreceptor matrix. In terms of biological role, may play a role in intercellular signaling and in connecting cells with the extracellular matrix. May take part in the regulation of cell motility, growth and differentiation. Binds hyaluronic acid. This chain is Versican core protein (VCAN), found in Homo sapiens (Human).